Here is a 537-residue protein sequence, read N- to C-terminus: Atrial natriuretic peptide receptor 3 (537 aa).

Positions 1-20 (MPSLLVLTFSACVLLGWALL) are cleaved as a signal peptide. A propeptide spanning residues 21 to 41 (ADCTGGGGSGGAGPGRGRRER) is cleaved from the precursor. The Extracellular segment spans residues 42 to 477 (EALPPQKIEV…PCKASGGLEE (436 aa)). Asn-82 carries N-linked (GlcNAc...) asparagine glycosylation. Disulfide bonds link Cys-104/Cys-132 and Cys-209/Cys-257. N-linked (GlcNAc...) asparagine glycans are attached at residues Asn-289 and Asn-390. The helical transmembrane segment at 478-500 (SAVTGIVVGALLGAGLLMAFYFF) threads the bilayer. The Cytoplasmic portion of the chain corresponds to 501–537 (RKKYRITIERRNQQEESNVGKHRELREDSIRSHFSVA).

The protein belongs to the ANF receptor family. As to quaternary structure, homodimer; disulfide-linked. Interacts with OSTN.

The protein resides in the cell membrane. In terms of biological role, receptor for the natriuretic peptide hormones, binding with similar affinities atrial natriuretic peptide NPPA/ANP, brain natriuretic peptide NPPB/BNP, and C-type natriuretic peptide NPPC/CNP. May function as a clearance receptor for NPPA, NPPB and NPPC, regulating their local concentrations and effects. Acts as a regulator of osteoblast differentiation and bone growth by binding to its ligand osteocrin, thereby preventing binding between NPR3/NPR-C and natriuretic peptides, leading to increase cGMP production. The chain is Atrial natriuretic peptide receptor 3 (NPR3) from Bos taurus (Bovine).